The primary structure comprises 125 residues: MSVLGLGTDIVEIERIRSQLERGGDRLAKRILTESELAIFVGSGQRELYLAKRFAAKEAVAKALGTGIGRGVSFQHIETYSDEFGAPCVRLSDGALERMQQLGGSQIRLSIADERHYAVATAILC.

The Mg(2+) site is built by Asp-9 and Glu-58.

Belongs to the P-Pant transferase superfamily. AcpS family. The cofactor is Mg(2+).

The protein localises to the cytoplasm. The catalysed reaction is apo-[ACP] + CoA = holo-[ACP] + adenosine 3',5'-bisphosphate + H(+). Transfers the 4'-phosphopantetheine moiety from coenzyme A to a Ser of acyl-carrier-protein. The protein is Holo-[acyl-carrier-protein] synthase of Shewanella amazonensis (strain ATCC BAA-1098 / SB2B).